The primary structure comprises 700 residues: Polyribonucleotide nucleotidyltransferase (700 aa).

Mg(2+)-binding residues include aspartate 484 and aspartate 490. A KH domain is found at 551–610 (PRVIRMVVDPEKIREIIGPGGKTISKIIAETGVKIDIEEDGRLYITASDLRSGERAKQMI). One can recognise an S1 motif domain in the interval 620–688 (GEIYLGKVLR…KLGRISLSRK (69 aa)).

This sequence belongs to the polyribonucleotide nucleotidyltransferase family. Mg(2+) serves as cofactor.

The protein resides in the cytoplasm. The enzyme catalyses RNA(n+1) + phosphate = RNA(n) + a ribonucleoside 5'-diphosphate. In terms of biological role, involved in mRNA degradation. Catalyzes the phosphorolysis of single-stranded polyribonucleotides processively in the 3'- to 5'-direction. The chain is Polyribonucleotide nucleotidyltransferase from Thermoanaerobacter sp. (strain X514).